The following is a 305-amino-acid chain: Mitochondrial citrate transporter D (305 aa).

Solcar repeat units follow at residues 10 to 101 (LPFG…WGAF), 111 to 197 (QTQS…VRAQ), and 211 to 298 (RNDL…VMDF). Helical transmembrane passes span 16–36 (FIAG…LDVV), 78–98 (SAPI…NDSW), 118–137 (LTGA…FELV), 176–196 (TLWR…QVRA), 208–228 (QQTR…TILN), and 270–291 (LYKG…LLVV).

The protein belongs to the mitochondrial carrier (TC 2.A.29) family.

It is found in the mitochondrion inner membrane. It catalyses the reaction citrate(in) + H(+)(in) = citrate(out) + H(+)(out). In terms of biological role, mitochondrial transporter that mediates citrate export from mitochondria to cytoplasm. Both ctpA, ctpB, and ctpD play important roles in citric acid transport across the mitochondrial membrane and function in a redundant manner. This chain is Mitochondrial citrate transporter D, found in Aspergillus niger (strain ATCC 1015 / CBS 113.46 / FGSC A1144 / LSHB Ac4 / NCTC 3858a / NRRL 328 / USDA 3528.7).